The following is a 239-amino-acid chain: Phosducin-like protein 2 (239 aa).

The stretch at 26–87 (TEDELFDLIK…IQQMKVEAEL (62 aa)) forms a coiled coil. The Phosducin domain maps to 36-196 (EAAEMATEAE…TTVNDIEWQL (161 aa)). Basic and acidic residues predominate over residues 42–59 (TEAEKNEKLENASLKDLK). 2 disordered regions span residues 42–64 (TEAE…MEDD) and 212–239 (ITLA…DSDD). Residues 90-239 (FGELKEISEP…DESDNSDSDD (150 aa)) form a thioredoxin fold region. The span at 214 to 224 (LARKKSQKSRY) shows a compositional bias: basic residues. Residues 230–239 (DESDNSDSDD) are compositionally biased toward acidic residues.

This sequence belongs to the phosducin family.

This chain is Phosducin-like protein 2 (phlp2), found in Dictyostelium discoideum (Social amoeba).